Reading from the N-terminus, the 173-residue chain is MGDVKMDKELLHKKIKKDIEDLINNHPPERTLGNLIPLSIFQAVRIGVLTAGCGIEAIIYNIGKDIGREVISRYVDRDNLLESFAEILKKAKIGILEVKKVEENEMILILKDCISCHNVPNVGTTLCHFEAGLIAGTLEKKLRRKVNAVETKCCGKGDEYCEFLVKIEDKLYW.

Belongs to the M.jannaschii MJ0150/MJ0739/MJ0745/MJ1460/MJ1642 family.

This is an uncharacterized protein from Methanocaldococcus jannaschii (strain ATCC 43067 / DSM 2661 / JAL-1 / JCM 10045 / NBRC 100440) (Methanococcus jannaschii).